The sequence spans 382 residues: Dual-specificity RNA methyltransferase RlmN (382 aa).

The active-site Proton acceptor is glutamate 95. In terms of domain architecture, Radical SAM core spans 101 to 348; it reads EDDRGTLCIS…TTVRKTRGDD (248 aa). Cysteine 108 and cysteine 353 form a disulfide bridge. [4Fe-4S] cluster contacts are provided by cysteine 115, cysteine 119, and cysteine 122. Residues 179-180, serine 211, 233-235, and asparagine 310 contribute to the S-adenosyl-L-methionine site; these read GE and SLH. Catalysis depends on cysteine 353, which acts as the S-methylcysteine intermediate.

This sequence belongs to the radical SAM superfamily. RlmN family. The cofactor is [4Fe-4S] cluster.

The protein localises to the cytoplasm. The catalysed reaction is adenosine(2503) in 23S rRNA + 2 reduced [2Fe-2S]-[ferredoxin] + 2 S-adenosyl-L-methionine = 2-methyladenosine(2503) in 23S rRNA + 5'-deoxyadenosine + L-methionine + 2 oxidized [2Fe-2S]-[ferredoxin] + S-adenosyl-L-homocysteine. The enzyme catalyses adenosine(37) in tRNA + 2 reduced [2Fe-2S]-[ferredoxin] + 2 S-adenosyl-L-methionine = 2-methyladenosine(37) in tRNA + 5'-deoxyadenosine + L-methionine + 2 oxidized [2Fe-2S]-[ferredoxin] + S-adenosyl-L-homocysteine. Functionally, specifically methylates position 2 of adenine 2503 in 23S rRNA and position 2 of adenine 37 in tRNAs. m2A2503 modification seems to play a crucial role in the proofreading step occurring at the peptidyl transferase center and thus would serve to optimize ribosomal fidelity. This is Dual-specificity RNA methyltransferase RlmN from Bordetella parapertussis (strain 12822 / ATCC BAA-587 / NCTC 13253).